A 133-amino-acid polypeptide reads, in one-letter code: Holo-[acyl-carrier-protein] synthase (133 aa).

2 residues coordinate Mg(2+): D8 and E56.

Belongs to the P-Pant transferase superfamily. AcpS family. Mg(2+) is required as a cofactor.

The protein resides in the cytoplasm. It carries out the reaction apo-[ACP] + CoA = holo-[ACP] + adenosine 3',5'-bisphosphate + H(+). In terms of biological role, transfers the 4'-phosphopantetheine moiety from coenzyme A to a Ser of acyl-carrier-protein. This is Holo-[acyl-carrier-protein] synthase from Clostridium perfringens (strain 13 / Type A).